The following is a 316-amino-acid chain: FAD:protein FMN transferase (316 aa).

FAD-binding positions include methionine 14, 88–90 (AFN), and aspartate 146. Alanine 149 is a Mg(2+) binding site. FAD-binding residues include lysine 152 and leucine 231. The Mg(2+) site is built by aspartate 257 and threonine 261.

This sequence belongs to the ApbE family. Requires Mg(2+) as cofactor.

It is found in the cytoplasm. It catalyses the reaction L-threonyl-[protein] + FAD = FMN-L-threonyl-[protein] + AMP + H(+). In terms of biological role, flavin transferase that catalyzes the transfer of the FMN moiety of FAD and its covalent binding to the hydroxyl group of a threonine residue in a target flavoprotein. Is responsible for the modification of the fumarate reductase KPK_2907. This Klebsiella pneumoniae (strain 342) protein is FAD:protein FMN transferase.